A 250-amino-acid polypeptide reads, in one-letter code: Troponin I 1 (250 aa).

2 disordered regions span residues 1-59 and 194-250; these read MSQI…ERKK and SVFT…ADEE. 2 stretches are compositionally biased toward basic and acidic residues: residues 21-45 and 206-221; these read DAQR…EAGQ and DKPE…KEES. Acidic residues predominate over residues 229-250; that stretch reads PVEEEETAASEGEEEEEEADEE.

This sequence belongs to the troponin I family. As to expression, strongly expressed in body wall muscle during embryogenesis, reduces during the larval stages to adult. In late-stage larvae and adults, expression is evident in the proximal gonad of both hermaphrodites and males.

Its function is as follows. Troponin I is the inhibitory subunit of troponin, the thin filament regulatory complex which confers calcium-sensitivity to muscle actomyosin ATPase activity. In Caenorhabditis elegans, this protein is Troponin I 1 (tni-1).